Here is a 180-residue protein sequence, read N- to C-terminus: ATP-dependent protease subunit HslV (180 aa).

Thr-7 is a catalytic residue. Ala-163, Cys-166, and Thr-169 together coordinate Na(+).

The protein belongs to the peptidase T1B family. HslV subfamily. A double ring-shaped homohexamer of HslV is capped on each side by a ring-shaped HslU homohexamer. The assembly of the HslU/HslV complex is dependent on binding of ATP.

The protein resides in the cytoplasm. The enzyme catalyses ATP-dependent cleavage of peptide bonds with broad specificity.. With respect to regulation, allosterically activated by HslU binding. In terms of biological role, protease subunit of a proteasome-like degradation complex believed to be a general protein degrading machinery. The sequence is that of ATP-dependent protease subunit HslV from Cytophaga hutchinsonii (strain ATCC 33406 / DSM 1761 / CIP 103989 / NBRC 15051 / NCIMB 9469 / D465).